A 321-amino-acid chain; its full sequence is 4-hydroxy-2-oxoglutarate aldolase, mitochondrial (321 aa).

A mitochondrion-targeting transit peptide spans 1 to 23; sequence MLGPQIWASMRQGLSRGLSRNVK. 71–72 contributes to the substrate binding site; the sequence is ST. Lysine 190 acts as the Schiff-base intermediate with substrate in catalysis. Serine 192 and glycine 216 together coordinate substrate.

This sequence belongs to the DapA family. Homotetramer.

The protein resides in the mitochondrion. It carries out the reaction (4S)-4-hydroxy-2-oxoglutarate = glyoxylate + pyruvate. The enzyme catalyses (4R)-4-hydroxy-2-oxoglutarate = glyoxylate + pyruvate. Inhibited by divalent cations. Catalyzes the final step in the metabolic pathway of hydroxyproline. The sequence is that of 4-hydroxy-2-oxoglutarate aldolase, mitochondrial (Hoga1) from Mus musculus (Mouse).